Here is a 535-residue protein sequence, read N- to C-terminus: GMP synthase [glutamine-hydrolyzing] (535 aa).

Residues 24 to 217 (KILIVDFGSQ…VRKVAGLKGD (194 aa)) form the Glutamine amidotransferase type-1 domain. The active-site Nucleophile is Cys101. Active-site residues include His191 and Glu193. The GMPS ATP-PPase domain occupies 218-410 (WTMRAFREEA…LGLPEVFVGR (193 aa)). Residue 245-251 (SGGVDSA) coordinates ATP.

Homodimer.

The enzyme catalyses XMP + L-glutamine + ATP + H2O = GMP + L-glutamate + AMP + diphosphate + 2 H(+). The protein operates within purine metabolism; GMP biosynthesis; GMP from XMP (L-Gln route): step 1/1. In terms of biological role, catalyzes the synthesis of GMP from XMP. This is GMP synthase [glutamine-hydrolyzing] from Rhodopseudomonas palustris (strain BisB18).